The following is a 128-amino-acid chain: Disintegrin ocellatusin (128 aa).

An N-terminal signal peptide occupies residues 1–20; it reads MIPVLLVTICLAVFPFQGSS. Residues 21 to 65 constitute a propeptide that is removed on maturation; sequence IILESGNINDYEIVYPKKVAVLPTGAMNSAHPCYDPVTCQPKEKE. In terms of domain architecture, Disintegrin spans 26–112; sequence GNINDYEIVY…DCPRNPYKGE (87 aa). 5 disulfides stabilise this stretch: C53/C59, C67/C76, C72/C97, C73/C102, and C85/C104. The Cell attachment site motif lies at 89 to 91; sequence RGD. Residues 116-128 constitute a propeptide that is removed on maturation; it reads MEWPAPAKGSVLM.

In terms of assembly, monomer. Expressed by the venom gland.

Its subcellular location is the secreted. Functionally, the disintegrin ocellatusin-10c1 is a poor inhibitor of platelet aggregation. The disintegrin inhibits the adhesion of cells expressing the RGD-dependent integrin alpha-5/beta-1 (ITGA5/ITGB1) to immobilized fibronectin. Inhibition on alpha-2b/beta-3 (ITGA2B/ITGB3) is low, and there is no inhibition on alpha-1/beta-1 (ITGA1/ITGB1), alpha-2/beta-1 (ITGA2/ITGB1) and alpha-6/beta-1 (ITGA6/ITGB1). In terms of biological role, the short monomeric disintegrin ocellatusin inhibits ADP-induced platelet aggregation (IC(50)=168 nM). Inhibits alpha-5/beta-1 (ITGA5/ITGB1) integrin and induces the expression of a ligand-induced binding site epitope on beta-1 integrin subunit. Has a direct chemotactic stimulus on human neutrophils in vitro. In Echis ocellatus (Ocellated saw-scaled viper), this protein is Disintegrin ocellatusin.